Reading from the N-terminus, the 97-residue chain is Aspartyl/glutamyl-tRNA(Asn/Gln) amidotransferase subunit C (97 aa).

Positions 68–97 (ETGFTQEEALSNAPQQSQGQFRTPKVVESA) are disordered. The segment covering 70-88 (GFTQEEALSNAPQQSQGQF) has biased composition (polar residues).

It belongs to the GatC family. In terms of assembly, heterotrimer of A, B and C subunits.

The enzyme catalyses L-glutamyl-tRNA(Gln) + L-glutamine + ATP + H2O = L-glutaminyl-tRNA(Gln) + L-glutamate + ADP + phosphate + H(+). The catalysed reaction is L-aspartyl-tRNA(Asn) + L-glutamine + ATP + H2O = L-asparaginyl-tRNA(Asn) + L-glutamate + ADP + phosphate + 2 H(+). In terms of biological role, allows the formation of correctly charged Asn-tRNA(Asn) or Gln-tRNA(Gln) through the transamidation of misacylated Asp-tRNA(Asn) or Glu-tRNA(Gln) in organisms which lack either or both of asparaginyl-tRNA or glutaminyl-tRNA synthetases. The reaction takes place in the presence of glutamine and ATP through an activated phospho-Asp-tRNA(Asn) or phospho-Glu-tRNA(Gln). This chain is Aspartyl/glutamyl-tRNA(Asn/Gln) amidotransferase subunit C, found in Akkermansia muciniphila (strain ATCC BAA-835 / DSM 22959 / JCM 33894 / BCRC 81048 / CCUG 64013 / CIP 107961 / Muc).